The primary structure comprises 771 residues: U-box domain-containing protein 6 (771 aa).

Residues 274-348 (IPPEELRCPI…ASWCEQNGIT (75 aa)) enclose the U-box domain. Positions 394-415 (EESSTIESERQQKEKNNAPDEV) are disordered. The span at 400 to 411 (ESERQQKEKNNA) shows a compositional bias: basic and acidic residues. ARM repeat units follow at residues 456–499 (EEAR…NLAV), 502–542 (NRNK…CLEK), 544–581 (KPVI…NLST), 583–622 (SPNI…NLAS), and 625–664 (EGKE…ILCT). The segment covering 706 to 722 (EQRHRDQPSPNKEEAPR) has biased composition (basic and acidic residues). Residues 706–751 (EQRHRDQPSPNKEEAPRKTVSAPMAIPAPVSAPESEVKPLTKSISR) form a disordered region.

It catalyses the reaction S-ubiquitinyl-[E2 ubiquitin-conjugating enzyme]-L-cysteine + [acceptor protein]-L-lysine = [E2 ubiquitin-conjugating enzyme]-L-cysteine + N(6)-ubiquitinyl-[acceptor protein]-L-lysine.. Its pathway is protein modification; protein ubiquitination. Functionally, functions as an E3 ubiquitin ligase. The protein is U-box domain-containing protein 6 (PUB6) of Arabidopsis thaliana (Mouse-ear cress).